Here is a 381-residue protein sequence, read N- to C-terminus: Homoserine O-succinyltransferase (381 aa).

One can recognise an AB hydrolase-1 domain in the interval Asn-45 to Asp-360. The active-site Nucleophile is the Ser-151. Residue Arg-221 coordinates substrate. Catalysis depends on residues Asp-321 and His-354. Residue Asp-355 participates in substrate binding.

The protein belongs to the AB hydrolase superfamily. MetX family. As to quaternary structure, homodimer.

The protein localises to the cytoplasm. The enzyme catalyses L-homoserine + succinyl-CoA = O-succinyl-L-homoserine + CoA. The protein operates within amino-acid biosynthesis; L-methionine biosynthesis via de novo pathway; O-succinyl-L-homoserine from L-homoserine: step 1/1. Transfers a succinyl group from succinyl-CoA to L-homoserine, forming succinyl-L-homoserine. This is Homoserine O-succinyltransferase from Burkholderia ambifaria (strain ATCC BAA-244 / DSM 16087 / CCUG 44356 / LMG 19182 / AMMD) (Burkholderia cepacia (strain AMMD)).